Consider the following 419-residue polypeptide: Acetylornithine aminotransferase (419 aa).

Pyridoxal 5'-phosphate is bound by residues 116–117 (GA) and F149. R152 provides a ligand contact to N(2)-acetyl-L-ornithine. 240–243 (DEVQ) serves as a coordination point for pyridoxal 5'-phosphate. The residue at position 269 (K269) is an N6-(pyridoxal phosphate)lysine. S296 is a binding site for N(2)-acetyl-L-ornithine. Position 297 (T297) interacts with pyridoxal 5'-phosphate.

Belongs to the class-III pyridoxal-phosphate-dependent aminotransferase family. ArgD subfamily. As to quaternary structure, homodimer. The cofactor is pyridoxal 5'-phosphate.

Its subcellular location is the cytoplasm. It catalyses the reaction N(2)-acetyl-L-ornithine + 2-oxoglutarate = N-acetyl-L-glutamate 5-semialdehyde + L-glutamate. Its pathway is amino-acid biosynthesis; L-arginine biosynthesis; N(2)-acetyl-L-ornithine from L-glutamate: step 4/4. This is Acetylornithine aminotransferase from Prochlorococcus marinus (strain SARG / CCMP1375 / SS120).